The following is a 31-amino-acid chain: leu operon leader peptide (31 aa).

Its function is as follows. Involved in control of the biosynthesis of leucine. This is leu operon leader peptide (leuL) from Buchnera aphidicola subsp. Rhopalosiphum padi.